A 71-amino-acid polypeptide reads, in one-letter code: Putative membrane protein insertion efficiency factor (71 aa).

Belongs to the UPF0161 family.

The protein localises to the cell inner membrane. In terms of biological role, could be involved in insertion of integral membrane proteins into the membrane. This is Putative membrane protein insertion efficiency factor from Nitrosospira multiformis (strain ATCC 25196 / NCIMB 11849 / C 71).